A 133-amino-acid polypeptide reads, in one-letter code: Small ribosomal subunit protein uS8 (133 aa).

This sequence belongs to the universal ribosomal protein uS8 family. As to quaternary structure, part of the 30S ribosomal subunit. Contacts proteins S5 and S12.

One of the primary rRNA binding proteins, it binds directly to 16S rRNA central domain where it helps coordinate assembly of the platform of the 30S subunit. In Prochlorococcus marinus (strain MIT 9215), this protein is Small ribosomal subunit protein uS8.